The chain runs to 504 residues: ATP synthase subunit alpha 2 (504 aa).

169–176 (GDRQTGKT) contributes to the ATP binding site.

This sequence belongs to the ATPase alpha/beta chains family. As to quaternary structure, F-type ATPases have 2 components, CF(1) - the catalytic core - and CF(0) - the membrane proton channel. CF(1) has five subunits: alpha(3), beta(3), gamma(1), delta(1), epsilon(1). CF(0) has three main subunits: a(1), b(2) and c(9-12). The alpha and beta chains form an alternating ring which encloses part of the gamma chain. CF(1) is attached to CF(0) by a central stalk formed by the gamma and epsilon chains, while a peripheral stalk is formed by the delta and b chains.

It localises to the cell membrane. The catalysed reaction is ATP + H2O + 4 H(+)(in) = ADP + phosphate + 5 H(+)(out). Produces ATP from ADP in the presence of a proton gradient across the membrane. The alpha chain is a regulatory subunit. In Listeria monocytogenes serotype 4b (strain F2365), this protein is ATP synthase subunit alpha 2.